Here is a 310-residue protein sequence, read N- to C-terminus: MLIDRFGRPVTNLRISLTKECNLSCFYCHREGQLDGERFMTPEEIERIVRVASRLGIKKVKLTGGEPTIRKDILEIIRRLKPYVVDLSLTTNGTTMYVLAEKLKEAGLDRVNISLDTLDRKKYKMITGFNVLDEVIKGIKKATKLFYPVKLNMVVMKGVNDDEIWDMMRFAGEVNAILQLIELEVPREMENSQFFKDFFYPLKPLEEKFEKLAVKVKERRMHRRRKYFIPIDGKIVEVEVVRSMHNTVFCMNCTRLRLTADGYLKTCLLRRDDLIDILGPLRNGASDADLIEIFKRAVLLRRPYWTSNSS.

In terms of domain architecture, Radical SAM core spans 5–232 (RFGRPVTNLR…RRRKYFIPID (228 aa)). Residue Arg14 coordinates GTP. Residues Cys21 and Cys25 each coordinate [4Fe-4S] cluster. An S-adenosyl-L-methionine-binding site is contributed by Tyr27. Residue Cys28 coordinates [4Fe-4S] cluster. Lys61 provides a ligand contact to GTP. Gly65 contacts S-adenosyl-L-methionine. GTP is bound at residue Thr90. Position 114 (Ser114) interacts with S-adenosyl-L-methionine. Lys150 serves as a coordination point for GTP. Met189 contacts S-adenosyl-L-methionine. [4Fe-4S] cluster-binding residues include Cys250 and Cys253. Position 255–257 (255–257 (RLR)) interacts with GTP. Position 267 (Cys267) interacts with [4Fe-4S] cluster.

It belongs to the radical SAM superfamily. MoaA family. [4Fe-4S] cluster is required as a cofactor.

The enzyme catalyses GTP + AH2 + S-adenosyl-L-methionine = (8S)-3',8-cyclo-7,8-dihydroguanosine 5'-triphosphate + 5'-deoxyadenosine + L-methionine + A + H(+). Its pathway is cofactor biosynthesis; molybdopterin biosynthesis. Catalyzes the cyclization of GTP to (8S)-3',8-cyclo-7,8-dihydroguanosine 5'-triphosphate. In Pyrococcus horikoshii (strain ATCC 700860 / DSM 12428 / JCM 9974 / NBRC 100139 / OT-3), this protein is Probable GTP 3',8-cyclase.